A 326-amino-acid chain; its full sequence is tRNA-modifying protein YgfZ (326 aa).

Folate is bound by residues tryptophan 27 and tryptophan 189.

The protein belongs to the tRNA-modifying YgfZ family.

It localises to the cytoplasm. Functionally, folate-binding protein involved in regulating the level of ATP-DnaA and in the modification of some tRNAs. It is probably a key factor in regulatory networks that act via tRNA modification, such as initiation of chromosomal replication. This Escherichia coli O139:H28 (strain E24377A / ETEC) protein is tRNA-modifying protein YgfZ.